Reading from the N-terminus, the 505-residue chain is Histidine ammonia-lyase (505 aa).

Positions 141–143 (ASG) form a cross-link, 5-imidazolinone (Ala-Gly). A 2,3-didehydroalanine (Ser) modification is found at Ser-142.

Belongs to the PAL/histidase family. In terms of processing, contains an active site 4-methylidene-imidazol-5-one (MIO), which is formed autocatalytically by cyclization and dehydration of residues Ala-Ser-Gly.

The protein localises to the cytoplasm. The catalysed reaction is L-histidine = trans-urocanate + NH4(+). Its pathway is amino-acid degradation; L-histidine degradation into L-glutamate; N-formimidoyl-L-glutamate from L-histidine: step 1/3. The sequence is that of Histidine ammonia-lyase from Bacillus cytotoxicus (strain DSM 22905 / CIP 110041 / 391-98 / NVH 391-98).